The following is a 451-amino-acid chain: NADH-quinone oxidoreductase subunit H (451 aa).

The next 9 membrane-spanning stretches (helical) occupy residues 30 to 50, 98 to 118, 138 to 158, 176 to 196, 213 to 233, 262 to 282, 302 to 322, 336 to 356, and 368 to 388; these read LIIV…LFMI, AVFI…FAVI, LPVA…GIVL, AAQV…VFLY, WGIL…VGET, LFYL…TTLF, WWPV…FIWL, QFGW…EAAI, and VIPF…ADLV.

It belongs to the complex I subunit 1 family. NDH-1 is composed of 14 different subunits. Subunits NuoA, H, J, K, L, M, N constitute the membrane sector of the complex.

Its subcellular location is the cell membrane. It carries out the reaction a quinone + NADH + 5 H(+)(in) = a quinol + NAD(+) + 4 H(+)(out). Functionally, NDH-1 shuttles electrons from NADH, via FMN and iron-sulfur (Fe-S) centers, to quinones in the respiratory chain. The immediate electron acceptor for the enzyme in this species is believed to be ubiquinone. Couples the redox reaction to proton translocation (for every two electrons transferred, four hydrogen ions are translocated across the cytoplasmic membrane), and thus conserves the redox energy in a proton gradient. This subunit may bind ubiquinone. This is NADH-quinone oxidoreductase subunit H from Acidothermus cellulolyticus (strain ATCC 43068 / DSM 8971 / 11B).